The following is a 181-amino-acid chain: Dual-action ribosomal maturation protein DarP (181 aa).

This sequence belongs to the DarP family.

The protein localises to the cytoplasm. Its function is as follows. Member of a network of 50S ribosomal subunit biogenesis factors which assembles along the 30S-50S interface, preventing incorrect 23S rRNA structures from forming. Promotes peptidyl transferase center (PTC) maturation. This is Dual-action ribosomal maturation protein DarP from Actinobacillus succinogenes (strain ATCC 55618 / DSM 22257 / CCUG 43843 / 130Z).